A 274-amino-acid chain; its full sequence is Thiamine kinase (274 aa).

This sequence belongs to the thiamine kinase family.

It catalyses the reaction thiamine + ATP = thiamine phosphate + ADP + H(+). It participates in cofactor biosynthesis; thiamine diphosphate biosynthesis; thiamine phosphate from thiamine: step 1/1. Catalyzes the ATP-dependent phosphorylation of thiamine to thiamine phosphate. Is involved in thiamine salvage. The sequence is that of Thiamine kinase from Salmonella typhimurium (strain LT2 / SGSC1412 / ATCC 700720).